Here is a 240-residue protein sequence, read N- to C-terminus: CRISPR-associated protein Cas5 3 (240 aa).

Belongs to the CRISPR-associated protein Cas5 family. Subtype I-A/Apern subfamily. Part of the aCascade ribonucleoprotein complex.

Functionally, CRISPR (clustered regularly interspaced short palindromic repeat) is an adaptive immune system that provides protection against mobile genetic elements (viruses, transposable elements and conjugative plasmids). CRISPR clusters contain spacers, sequences complementary to antecedent mobile elements, and target invading nucleic acids. CRISPR clusters are transcribed and processed into CRISPR RNA (crRNA). The polypeptide is CRISPR-associated protein Cas5 3 (cas5c) (Saccharolobus solfataricus (strain ATCC 35092 / DSM 1617 / JCM 11322 / P2) (Sulfolobus solfataricus)).